The primary structure comprises 134 residues: uncharacterized protein (134 aa).

A run of 3 helical transmembrane segments spans residues 5–25 (FGIF…FGGF), 30–50 (LILL…ETII), and 62–82 (LVKK…DQLL).

The protein belongs to the bacteriophage holin family. Cp-1 holin subfamily.

The protein resides in the cell membrane. This is an uncharacterized protein from Bacillus subtilis (strain 168).